A 283-amino-acid polypeptide reads, in one-letter code: Formamidopyrimidine-DNA glycosylase (283 aa).

Pro2 functions as the Schiff-base intermediate with DNA in the catalytic mechanism. Glu3 acts as the Proton donor in catalysis. The Proton donor; for beta-elimination activity role is filled by Lys58. Residues His100, Arg119, and Arg162 each contribute to the DNA site. The segment at 247 to 283 (DVYGREGEPCRRAGCTGTVTRITQSGRSSFYCGKCQR) adopts an FPG-type zinc-finger fold. Arg273 serves as the catalytic Proton donor; for delta-elimination activity.

The protein belongs to the FPG family. As to quaternary structure, monomer. The cofactor is Zn(2+).

The catalysed reaction is Hydrolysis of DNA containing ring-opened 7-methylguanine residues, releasing 2,6-diamino-4-hydroxy-5-(N-methyl)formamidopyrimidine.. It carries out the reaction 2'-deoxyribonucleotide-(2'-deoxyribose 5'-phosphate)-2'-deoxyribonucleotide-DNA = a 3'-end 2'-deoxyribonucleotide-(2,3-dehydro-2,3-deoxyribose 5'-phosphate)-DNA + a 5'-end 5'-phospho-2'-deoxyribonucleoside-DNA + H(+). Its function is as follows. Involved in base excision repair of DNA damaged by oxidation or by mutagenic agents. Acts as a DNA glycosylase that recognizes and removes damaged bases. Has a preference for oxidized purines, such as 7,8-dihydro-8-oxoguanine (8-oxoG). Has AP (apurinic/apyrimidinic) lyase activity and introduces nicks in the DNA strand. Cleaves the DNA backbone by beta-delta elimination to generate a single-strand break at the site of the removed base with both 3'- and 5'-phosphates. This is Formamidopyrimidine-DNA glycosylase from Ruegeria sp. (strain TM1040) (Silicibacter sp.).